The sequence spans 565 residues: Proline--tRNA ligase (565 aa).

Belongs to the class-II aminoacyl-tRNA synthetase family. ProS type 1 subfamily. As to quaternary structure, homodimer.

The protein resides in the cytoplasm. It carries out the reaction tRNA(Pro) + L-proline + ATP = L-prolyl-tRNA(Pro) + AMP + diphosphate. Functionally, catalyzes the attachment of proline to tRNA(Pro) in a two-step reaction: proline is first activated by ATP to form Pro-AMP and then transferred to the acceptor end of tRNA(Pro). As ProRS can inadvertently accommodate and process non-cognate amino acids such as alanine and cysteine, to avoid such errors it has two additional distinct editing activities against alanine. One activity is designated as 'pretransfer' editing and involves the tRNA(Pro)-independent hydrolysis of activated Ala-AMP. The other activity is designated 'posttransfer' editing and involves deacylation of mischarged Ala-tRNA(Pro). The misacylated Cys-tRNA(Pro) is not edited by ProRS. In Francisella tularensis subsp. mediasiatica (strain FSC147), this protein is Proline--tRNA ligase.